A 200-amino-acid chain; its full sequence is GTP cyclohydrolase-2 (200 aa).

Position 50-54 (50-54 (RVHSE)) interacts with GTP. Residues C55, C66, and C68 each contribute to the Zn(2+) site. Residues Q71, 93-95 (EGR), and T115 each bind GTP. D127 functions as the Proton acceptor in the catalytic mechanism. The active-site Nucleophile is the R129. Positions 150 and 155 each coordinate GTP.

It belongs to the GTP cyclohydrolase II family. Zn(2+) is required as a cofactor.

It carries out the reaction GTP + 4 H2O = 2,5-diamino-6-hydroxy-4-(5-phosphoribosylamino)-pyrimidine + formate + 2 phosphate + 3 H(+). It functions in the pathway cofactor biosynthesis; riboflavin biosynthesis; 5-amino-6-(D-ribitylamino)uracil from GTP: step 1/4. Functionally, catalyzes the conversion of GTP to 2,5-diamino-6-ribosylamino-4(3H)-pyrimidinone 5'-phosphate (DARP), formate and pyrophosphate. The polypeptide is GTP cyclohydrolase-2 (Acinetobacter baumannii (strain AB307-0294)).